Reading from the N-terminus, the 220-residue chain is MRVKICGITQPEQGRAIANLGANTLGFICVAQSPRYVTPNQIREIIEQLPPLVDKIGVFVNAPATEIINIVAQTGLTGVQLHGDETPEMCQQLKISLPDVEIIRALRIKSSQSLREVALYFDSVNTLLLDAYHPHLFGGTGATIDWEILAQFKSPIPWLLAGGLKPDNLVSALSQLSPHGIDLSSGVERAPGDKDLDKVAELFQQLHRWKSNFKEKLMEN.

It belongs to the TrpF family.

It carries out the reaction N-(5-phospho-beta-D-ribosyl)anthranilate = 1-(2-carboxyphenylamino)-1-deoxy-D-ribulose 5-phosphate. It participates in amino-acid biosynthesis; L-tryptophan biosynthesis; L-tryptophan from chorismate: step 3/5. This chain is N-(5'-phosphoribosyl)anthranilate isomerase, found in Gloeothece citriformis (strain PCC 7424) (Cyanothece sp. (strain PCC 7424)).